The chain runs to 226 residues: Ribonuclease 3 (226 aa).

Positions 6–128 (VNQLQKKLGY…LIGAIFLDSD (123 aa)) constitute an RNase III domain. Mg(2+) is bound at residue Glu41. The active site involves Asp45. Mg(2+) is bound by residues Asp114 and Glu117. Glu117 is a catalytic residue. Residues 155 to 225 (DPKTRLQEYL…AEQALIQLEL (71 aa)) enclose the DRBM domain.

Belongs to the ribonuclease III family. Homodimer. It depends on Mg(2+) as a cofactor.

It is found in the cytoplasm. It catalyses the reaction Endonucleolytic cleavage to 5'-phosphomonoester.. Digests double-stranded RNA. Involved in the processing of primary rRNA transcript to yield the immediate precursors to the large and small rRNAs (23S and 16S). Processes some mRNAs, and tRNAs when they are encoded in the rRNA operon. Processes pre-crRNA and tracrRNA of type II CRISPR loci if present in the organism. In Proteus mirabilis (strain HI4320), this protein is Ribonuclease 3.